The sequence spans 103 residues: Sec-independent protein translocase protein TatA (103 aa).

Residues 1–21 (MGNIFSPTHLIVILLIVLVLF) form a helical membrane-spanning segment. A disordered region spans residues 60-103 (YSKTTDVRPQQSQPLSVKRAAERRKGSSSFKEGKASVAKKQRGK).

Belongs to the TatA/E family. As to quaternary structure, the Tat system comprises two distinct complexes: a TatABC complex, containing multiple copies of TatA, TatB and TatC subunits, and a separate TatA complex, containing only TatA subunits. Substrates initially bind to the TatABC complex, which probably triggers association of the separate TatA complex to form the active translocon.

The protein localises to the cell inner membrane. Its function is as follows. Part of the twin-arginine translocation (Tat) system that transports large folded proteins containing a characteristic twin-arginine motif in their signal peptide across membranes. TatA could form the protein-conducting channel of the Tat system. The polypeptide is Sec-independent protein translocase protein TatA (Bartonella quintana (strain Toulouse) (Rochalimaea quintana)).